The primary structure comprises 423 residues: Galactosylceramide sulfotransferase (423 aa).

Residues 1–14 lie on the Cytoplasmic side of the membrane; the sequence is MLPPQKKPWESMAK. The chain crosses the membrane as a helical; Signal-anchor for type II membrane protein span at residues 15–35; sequence GLVLGALFTSFLLLVYSYAVP. Topologically, residues 36–423 are lumenal; sequence PLHAGLASTT…WKFIRDFLRW (388 aa). N-linked (GlcNAc...) asparagine glycans are attached at residues asparagine 66 and asparagine 312.

It belongs to the galactose-3-O-sulfotransferase family. In terms of tissue distribution, expressed in kidney proximal tubule, gastric mucosa and adenocarcinoma. Highly expressed in renal cell carcinoma cell lines.

The protein localises to the golgi apparatus membrane. It catalyses the reaction a beta-D-galactosyl-(1&lt;-&gt;1')-N-acylsphing-4-enine + 3'-phosphoadenylyl sulfate = an N-acyl-1-beta-D-(3-O-sulfo)-galactosyl-sphing-4-enine + adenosine 3',5'-bisphosphate + H(+). It carries out the reaction a 1-O-alkyl-2-acyl-3-O-(beta-D-galactosyl)-sn-glycerol + 3'-phosphoadenylyl sulfate = a 1-O-alkyl-2-acyl-3-(beta-D-3-sulfogalactosyl)-sn-glycerol + adenosine 3',5'-bisphosphate + H(+). The enzyme catalyses a beta-D-Gal-(1&lt;-&gt;1')-ceramide + 3'-phosphoadenylyl sulfate = 1-(3-O-sulfo-beta-D-galactosyl)-ceramide + adenosine 3',5'-bisphosphate + H(+). The catalysed reaction is a 1,2-diacyl-3-O-(beta-D-galactosyl)-sn-glycerol + 3'-phosphoadenylyl sulfate = 1,2-diacyl-3-(3-O-sulfo-beta-D-galactosyl)-sn-glycerol + adenosine 3',5'-bisphosphate + H(+). It catalyses the reaction a beta-D-Gal-(1-&gt;4)-beta-D-Glc-(1&lt;-&gt;1)-Cer(d18:1(4E)) + 3'-phosphoadenylyl sulfate = beta-D-3-sulfogalactosyl-(1-&gt;4)-beta-D-glucosyl-(1&lt;-&gt;1')-N-acylsphing-4-enine + adenosine 3',5'-bisphosphate + H(+). Its pathway is lipid metabolism; sphingolipid metabolism. Functionally, catalyzes the transfer of a sulfate group to position 3 of non-reducing beta-galactosyl residues in glycerolipids and sphingolipids, therefore participates in the biosynthesis of sulfoglycolipids. Catalyzes the synthesis of galactosylceramide sulfate (sulfatide), a major lipid component of the myelin sheath and of monogalactosylalkylacylglycerol sulfate (seminolipid), present in spermatocytes. Seems to prefer beta-glycosides at the non-reducing termini of sugar chains attached to a lipid moiety. Also acts on lactosylceramide, galactosyl 1-alkyl-2-sn-glycerol and galactosyl diacylglycerol (in vitro). The polypeptide is Galactosylceramide sulfotransferase (Homo sapiens (Human)).